The chain runs to 143 residues: Hemoglobin subunit alpha (143 aa).

The Globin domain maps to 3-143 (KLSGEDKANV…TMRLCISKYR (141 aa)). Histidine 60 contacts O2. Histidine 89 lines the heme b pocket.

Belongs to the globin family. Heterotetramer of two alpha chains and two beta chains. Red blood cells.

Functionally, involved in oxygen transport from the lung to the various peripheral tissues. In Ambystoma mexicanum (Axolotl), this protein is Hemoglobin subunit alpha (HBA).